The primary structure comprises 274 residues: Imidazole glycerol phosphate synthase subunit HisF (274 aa).

Catalysis depends on residues Asp-11 and Asp-134.

It belongs to the HisA/HisF family. Heterodimer of HisH and HisF.

It is found in the cytoplasm. The catalysed reaction is 5-[(5-phospho-1-deoxy-D-ribulos-1-ylimino)methylamino]-1-(5-phospho-beta-D-ribosyl)imidazole-4-carboxamide + L-glutamine = D-erythro-1-(imidazol-4-yl)glycerol 3-phosphate + 5-amino-1-(5-phospho-beta-D-ribosyl)imidazole-4-carboxamide + L-glutamate + H(+). It functions in the pathway amino-acid biosynthesis; L-histidine biosynthesis; L-histidine from 5-phospho-alpha-D-ribose 1-diphosphate: step 5/9. IGPS catalyzes the conversion of PRFAR and glutamine to IGP, AICAR and glutamate. The HisF subunit catalyzes the cyclization activity that produces IGP and AICAR from PRFAR using the ammonia provided by the HisH subunit. This is Imidazole glycerol phosphate synthase subunit HisF from Methanosphaera stadtmanae (strain ATCC 43021 / DSM 3091 / JCM 11832 / MCB-3).